A 569-amino-acid polypeptide reads, in one-letter code: 2-succinyl-5-enolpyruvyl-6-hydroxy-3-cyclohexene-1-carboxylate synthase (569 aa).

This sequence belongs to the TPP enzyme family. MenD subfamily. Homodimer. Mg(2+) serves as cofactor. Mn(2+) is required as a cofactor. It depends on thiamine diphosphate as a cofactor.

It carries out the reaction isochorismate + 2-oxoglutarate + H(+) = 5-enolpyruvoyl-6-hydroxy-2-succinyl-cyclohex-3-ene-1-carboxylate + CO2. It functions in the pathway quinol/quinone metabolism; 1,4-dihydroxy-2-naphthoate biosynthesis; 1,4-dihydroxy-2-naphthoate from chorismate: step 2/7. It participates in quinol/quinone metabolism; menaquinone biosynthesis. In terms of biological role, catalyzes the thiamine diphosphate-dependent decarboxylation of 2-oxoglutarate and the subsequent addition of the resulting succinic semialdehyde-thiamine pyrophosphate anion to isochorismate to yield 2-succinyl-5-enolpyruvyl-6-hydroxy-3-cyclohexene-1-carboxylate (SEPHCHC). This is 2-succinyl-5-enolpyruvyl-6-hydroxy-3-cyclohexene-1-carboxylate synthase from Shewanella sediminis (strain HAW-EB3).